The sequence spans 37 residues: Potassium channel toxin alpha-KTx 2.19 (37 aa).

3 disulfide bridges follow: cysteine 7–cysteine 28, cysteine 13–cysteine 33, and cysteine 17–cysteine 35.

As to expression, expressed by the venom gland.

It localises to the secreted. Functionally, inhibitor of voltage-gated potassium channels. The polypeptide is Potassium channel toxin alpha-KTx 2.19 (Rhopalurus junceus (Caribbean blue scorpion)).